Reading from the N-terminus, the 310-residue chain is uncharacterized protein (310 aa).

Disordered stretches follow at residues 22–163 (LARQ…PVEH) and 178–209 (EAEA…VEGD). 2 stretches are compositionally biased toward basic and acidic residues: residues 56 to 66 (IIRDDHHHAGP) and 183 to 197 (TEVR…ERHA). Over residues 198 to 209 (AAAAAGTDVEGD) the composition is skewed to low complexity. 3 helical membrane-spanning segments follow: residues 231-251 (ALVV…FIAF), 257-277 (WNSI…VVSV), and 286-306 (IAST…PLAL).

This sequence to M.leprae ML2433.

It localises to the cell membrane. This is an uncharacterized protein from Mycobacterium tuberculosis (strain CDC 1551 / Oshkosh).